The following is a 236-amino-acid chain: Ubiquinone biosynthesis O-methyltransferase (236 aa).

Residues Arg-39, Gly-59, Asp-80, and Met-124 each coordinate S-adenosyl-L-methionine.

It belongs to the methyltransferase superfamily. UbiG/COQ3 family.

The catalysed reaction is a 3-demethylubiquinol + S-adenosyl-L-methionine = a ubiquinol + S-adenosyl-L-homocysteine + H(+). The enzyme catalyses a 3-(all-trans-polyprenyl)benzene-1,2-diol + S-adenosyl-L-methionine = a 2-methoxy-6-(all-trans-polyprenyl)phenol + S-adenosyl-L-homocysteine + H(+). It participates in cofactor biosynthesis; ubiquinone biosynthesis. Its function is as follows. O-methyltransferase that catalyzes the 2 O-methylation steps in the ubiquinone biosynthetic pathway. This is Ubiquinone biosynthesis O-methyltransferase from Shewanella halifaxensis (strain HAW-EB4).